Reading from the N-terminus, the 327-residue chain is Autoinducer 2 import system permease protein LsrD (327 aa).

9 helical membrane passes run 3–23 (LNWE…FGAI), 41–61 (ICIG…GIDI), 63–83 (LGST…FGLP), 86–106 (LAVP…AALI), 114–134 (LVIT…LSGL), 158–178 (VLGL…FWLI), 211–231 (ALYG…VSYF), 257–277 (IYGG…VGYL), and 283–303 (MVGI…VVVV).

Belongs to the binding-protein-dependent transport system permease family. AraH/RbsC subfamily. The complex is composed of two ATP-binding proteins (LsrA), two transmembrane proteins (LsrC and LsrD) and a solute-binding protein (LsrB).

The protein localises to the cell inner membrane. Part of the ABC transporter complex LsrABCD involved in autoinducer 2 (AI-2) import. Probably responsible for the translocation of the substrate across the membrane. The polypeptide is Autoinducer 2 import system permease protein LsrD (lsrD) (Enterobacter sp. (strain 638)).